A 164-amino-acid polypeptide reads, in one-letter code: NADH-quinone oxidoreductase subunit I (164 aa).

4Fe-4S ferredoxin-type domains lie at 54–84 (LRRYPNGEERCIACKLCEAICPAQAITIEAG) and 95–124 (VRYDIDMVKCIYCGFCQEACPVDAIVEGPN). 8 residues coordinate [4Fe-4S] cluster: Cys64, Cys67, Cys70, Cys74, Cys104, Cys107, Cys110, and Cys114.

The protein belongs to the complex I 23 kDa subunit family. NDH-1 is composed of 14 different subunits. Subunits NuoA, H, J, K, L, M, N constitute the membrane sector of the complex. It depends on [4Fe-4S] cluster as a cofactor.

It localises to the cell inner membrane. It carries out the reaction a quinone + NADH + 5 H(+)(in) = a quinol + NAD(+) + 4 H(+)(out). In terms of biological role, NDH-1 shuttles electrons from NADH, via FMN and iron-sulfur (Fe-S) centers, to quinones in the respiratory chain. The immediate electron acceptor for the enzyme in this species is believed to be ubiquinone. Couples the redox reaction to proton translocation (for every two electrons transferred, four hydrogen ions are translocated across the cytoplasmic membrane), and thus conserves the redox energy in a proton gradient. The sequence is that of NADH-quinone oxidoreductase subunit I from Mesorhizobium japonicum (strain LMG 29417 / CECT 9101 / MAFF 303099) (Mesorhizobium loti (strain MAFF 303099)).